The chain runs to 509 residues: Histidine--tRNA ligase, cytoplasmic (509 aa).

A2 carries the N-acetylalanine modification. The region spanning 3–59 (ERAALEELVKLQGERVRGLKQQKASAELIEEEVAKLLKLKAQLGPDESKQKFVLKTP) is the WHEP-TRS domain. Phosphoserine is present on S66. L-histidine-binding positions include 130 to 132 (DLT), R157, Q173, D177, R326, and 330 to 331 (YY). A Phosphoserine modification is found at S356.

Belongs to the class-II aminoacyl-tRNA synthetase family. In terms of assembly, homodimer. Brain, heart, liver and kidney.

The protein resides in the cytoplasm. It catalyses the reaction tRNA(His) + L-histidine + ATP = L-histidyl-tRNA(His) + AMP + diphosphate + H(+). Catalyzes the ATP-dependent ligation of histidine to the 3'-end of its cognate tRNA, via the formation of an aminoacyl-adenylate intermediate (His-AMP). Plays a role in axon guidance. The chain is Histidine--tRNA ligase, cytoplasmic from Homo sapiens (Human).